Consider the following 854-residue polypeptide: Fibroblast growth factor receptor 1 (854 aa).

The signal sequence occupies residues 1 to 20 (MSGLFFLLSELLILLGKINS). The Extracellular segment spans residues 21–383 (VSKKSLCHPE…NFFMNSVPLS (363 aa)). One can recognise an Ig-like C2-type 1 domain in the interval 29–120 (PELFKIDNKL…SSVFFLINVT (92 aa)). Residues Cys50 and Cys102 are joined by a disulfide bond. N-linked (GlcNAc...) asparagine glycosylation is found at Asn95, Asn99, Asn110, Asn118, Asn140, Asn175, Asn202, Asn248, Asn283, Asn317, and Asn346. 2 Ig-like C2-type domains span residues 147-259 (PEMG…FTFT) and 268-369 (PHLT…LSVI). Cys166 and Cys242 form a disulfide bridge. A disulfide bridge connects residues Cys288 and Cys353. Residues 384 to 404 (IFLVIGFFVAIILLSLIIYCF) traverse the membrane as a helical segment. Residues 405–854 (FLQYKNAVDS…SDYLEPKCLV (450 aa)) lie on the Cytoplasmic side of the membrane. A Protein kinase domain is found at 551-822 (KITNKKLGEG…EIVEILIDII (272 aa)). ATP contacts are provided by residues 557 to 565 (LGEGAFGMV) and Lys585. Catalysis depends on Asp689, which acts as the Proton acceptor. At Tyr718 the chain carries Phosphotyrosine; by autocatalysis.

It belongs to the protein kinase superfamily. Tyr protein kinase family. Fibroblast growth factor receptor subfamily. In terms of tissue distribution, expressed in brain, stem cells and the mesenchymal cells.

The protein resides in the membrane. It catalyses the reaction L-tyrosyl-[protein] + ATP = O-phospho-L-tyrosyl-[protein] + ADP + H(+). Functionally, receptor for basic fibroblast growth factor. The chain is Fibroblast growth factor receptor 1 (FGFR1) from Dugesia japonica (Planarian).